The primary structure comprises 365 residues: MNAKEFLIELLKFKSVTPNDDGALNFIAMELSDFEAFFIEKEGIKNLLLTKKFKDEGEHLAFGGHVDVVPAGEGWSNNAFAPVEKEGFIYARGAQDMKSGVAAFVDAVKNADFKGARLSLILTSDEEGEAIYGTKAVLEWMQERDMLPDYAVVAEPTCVKKIGDSIKIGRRGSINGKLLIRGKQGHVAYPEKCINPVHDFAPVLKLLAGFDLDPGSAEFSPSKIVITDIRGGMEVCNVTPNDLKLMFNVRNSPDTSLEDVKSYVEKICHGLNYELELKQSSEAFLTNIDNKIVQKMNESVQKITHEVPELNTKGGTSDARYFAKYGVKVVEFGVCNDRIHAIDERVSIEEFEKLCLVFKDLIENF.

Histidine 65 lines the Zn(2+) pocket. Aspartate 67 is a catalytic residue. Aspartate 96 contacts Zn(2+). The active-site Proton acceptor is the glutamate 126. Zn(2+)-binding residues include glutamate 127, glutamate 155, and histidine 340.

It belongs to the peptidase M20A family. DapE subfamily. In terms of assembly, homodimer. Requires Zn(2+) as cofactor. Co(2+) is required as a cofactor.

It carries out the reaction N-succinyl-(2S,6S)-2,6-diaminopimelate + H2O = (2S,6S)-2,6-diaminopimelate + succinate. The protein operates within amino-acid biosynthesis; L-lysine biosynthesis via DAP pathway; LL-2,6-diaminopimelate from (S)-tetrahydrodipicolinate (succinylase route): step 3/3. Its function is as follows. Catalyzes the hydrolysis of N-succinyl-L,L-diaminopimelic acid (SDAP), forming succinate and LL-2,6-diaminopimelate (DAP), an intermediate involved in the bacterial biosynthesis of lysine and meso-diaminopimelic acid, an essential component of bacterial cell walls. This is Succinyl-diaminopimelate desuccinylase from Campylobacter jejuni subsp. jejuni serotype O:23/36 (strain 81-176).